The chain runs to 74 residues: Porwaprin-a (74 aa).

Positions 1 to 24 are cleaved as a signal peptide; that stretch reads MSSGGLLLLLGLLTLWEVLTPVSS. The WAP domain occupies 27-71; sequence RPKKLGLCPPRPQKPCVKECKNDWSCPGQQKCCNYGCIDECRDPI. Disulfide bonds link Cys34-Cys59, Cys42-Cys63, Cys46-Cys58, and Cys52-Cys67.

Belongs to the venom waprin family. Expressed by the venom gland.

The protein resides in the secreted. In terms of biological role, damages membranes of susceptible bacteria. Has no hemolytic activity. Not toxic to mice. Does not inhibit the proteinases elastase and cathepsin G. This Pseudechis porphyriacus (Red-bellied black snake) protein is Porwaprin-a.